We begin with the raw amino-acid sequence, 293 residues long: ATP synthase gamma chain (293 aa).

Belongs to the ATPase gamma chain family. In terms of assembly, F-type ATPases have 2 components, CF(1) - the catalytic core - and CF(0) - the membrane proton channel. CF(1) has five subunits: alpha(3), beta(3), gamma(1), delta(1), epsilon(1). CF(0) has three main subunits: a, b and c.

It is found in the cell inner membrane. Produces ATP from ADP in the presence of a proton gradient across the membrane. The gamma chain is believed to be important in regulating ATPase activity and the flow of protons through the CF(0) complex. This is ATP synthase gamma chain from Psychrobacter cryohalolentis (strain ATCC BAA-1226 / DSM 17306 / VKM B-2378 / K5).